We begin with the raw amino-acid sequence, 227 residues long: Urease accessory protein UreG (227 aa).

The segment covering 1-10 has biased composition (basic and acidic residues); that stretch reads MHLDHAHTHD. The segment at 1 to 22 is disordered; that stretch reads MHLDHAHTHDGPSAVSADAHRP. 35–42 is a binding site for GTP; the sequence is GPVGSGKT.

The protein belongs to the SIMIBI class G3E GTPase family. UreG subfamily. In terms of assembly, homodimer. UreD, UreF and UreG form a complex that acts as a GTP-hydrolysis-dependent molecular chaperone, activating the urease apoprotein by helping to assemble the nickel containing metallocenter of UreC. The UreE protein probably delivers the nickel.

It is found in the cytoplasm. Facilitates the functional incorporation of the urease nickel metallocenter. This process requires GTP hydrolysis, probably effectuated by UreG. This Streptomyces avermitilis (strain ATCC 31267 / DSM 46492 / JCM 5070 / NBRC 14893 / NCIMB 12804 / NRRL 8165 / MA-4680) protein is Urease accessory protein UreG.